Consider the following 599-residue polypeptide: Elongation factor 4 (599 aa).

The region spanning 5–187 is the tr-type G domain; that stretch reads SHIRNFSIIA…RLVHTIPAPE (183 aa). GTP contacts are provided by residues 17-22 and 134-137; these read DHGKST and NKMD.

The protein belongs to the TRAFAC class translation factor GTPase superfamily. Classic translation factor GTPase family. LepA subfamily.

It localises to the cell inner membrane. The enzyme catalyses GTP + H2O = GDP + phosphate + H(+). Functionally, required for accurate and efficient protein synthesis under certain stress conditions. May act as a fidelity factor of the translation reaction, by catalyzing a one-codon backward translocation of tRNAs on improperly translocated ribosomes. Back-translocation proceeds from a post-translocation (POST) complex to a pre-translocation (PRE) complex, thus giving elongation factor G a second chance to translocate the tRNAs correctly. Binds to ribosomes in a GTP-dependent manner. In Pseudomonas putida (strain ATCC 47054 / DSM 6125 / CFBP 8728 / NCIMB 11950 / KT2440), this protein is Elongation factor 4.